The primary structure comprises 49 residues: Astexin-3 (49 aa).

A propeptide spanning residues 1-25 (MRTYNRSLPARAGLTDLGKVTTHTK) is cleaved from the precursor. The segment at residues 26–34 (GPTPMVGLD) is a cross-link (isoaspartyl glycine isopeptide (Gly-Asp)).

In terms of processing, this lasso peptide is hydrolyzed to a linear form by the isopeptidase AtxE2, in vitro. The isopeptidase AtxE2 only recognizes the threaded form (but not the unthreaded form).

Its subcellular location is the cytoplasm. The protein resides in the secreted. In terms of biological role, shows weak antimicrobial activity against its phylogenetic relative Caulobacter crescentus. Does not show activity against other bacteria tested (E.coli, Vibrio sp, Burkhoderia thailandensis, and Salmonella newport). The chain is Astexin-3 from Asticcacaulis excentricus (strain ATCC 15261 / DSM 4724 / KCTC 12464 / NCIMB 9791 / VKM B-1370 / CB 48).